Reading from the N-terminus, the 383-residue chain is MTEVEAKATATEETTKEEEEAPETTAEQTEESAQETSENVSKLEASTIRQLEYYFGDANLARDKFLQEQISKDEGWVPVDVLLTFKRLKSLSEDKKVIVDAIEKSDEGLIEVSEDREKLRRHPERPLPEQNEETRKEIYGRTVYVKGFAPEEGTQMSELLEFFEPFEKITNIVMRKYHDKATKKYLFKGSVFVTFATKDHCAEFLKKEKLGYKGKELIRKMQDDYFEEKKAERRKKDKKKEEDRFNIDHLPKGASVHLSGFNKDTSRETIKETILKLDESLEVAFIDYAKTDTEGTVRFAADDAGKKFMEKLTDSKIQIDEEEITARLLEGDEEKEFLRKVVKDQQARRQASNARNKGRTPEGRQASRPPQEWRRKAKGGRGE.

Residues 1–43 (MTEVEAKATATEETTKEEEEAPETTAEQTEESAQETSENVSKL) form a disordered region. Positions 15-33 (TKEEEEAPETTAEQTEESA) are enriched in acidic residues. Positions 37 to 129 (SENVSKLEAS…RRHPERPLPE (93 aa)) constitute an HTH La-type RNA-binding domain. Residues 141-228 (RTVYVKGFAP…RKMQDDYFEE (88 aa)) enclose the RRM domain. Positions 249-368 (HLPKGASVHL…RTPEGRQASR (120 aa)) constitute a xRRM domain. Residues 343 to 383 (KDQQARRQASNARNKGRTPEGRQASRPPQEWRRKAKGGRGE) are disordered.

It localises to the nucleus. The protein resides in the cytoplasm. In terms of biological role, may be involved in transcription termination by RNA polymerase III. Binds RNA and DNA. Binds to the 3' end of the minus strand of Sindbis virus RNA. This may be significant for Sindbis virus RNA replication. This Aedes albopictus (Asian tiger mosquito) protein is La protein homolog.